A 176-amino-acid polypeptide reads, in one-letter code: Ribosome maturation factor RimM (176 aa).

A PRC barrel domain is found at 100 to 173 (KDEYHYHDLI…WLLINPPPGL (74 aa)).

The protein belongs to the RimM family. Binds ribosomal protein uS19.

The protein localises to the cytoplasm. In terms of biological role, an accessory protein needed during the final step in the assembly of 30S ribosomal subunit, possibly for assembly of the head region. Essential for efficient processing of 16S rRNA. May be needed both before and after RbfA during the maturation of 16S rRNA. It has affinity for free ribosomal 30S subunits but not for 70S ribosomes. This is Ribosome maturation factor RimM from Prochlorococcus marinus (strain NATL2A).